The following is a 200-amino-acid chain: BmK-YA precursor (200 aa).

The first 23 residues, Met-1–Ser-23, serve as a signal peptide directing secretion. A propeptide spanning residues Asp-24–Asp-34 is cleaved from the precursor. A disordered region spans residues Trp-30 to Asp-200. Ala-42 carries the post-translational modification Alanine amide. Positions Ser-45–Asp-100 are excised as a propeptide. Ala-108 carries the alanine amide modification. Positions Ser-111–Asp-144 are excised as a propeptide. Ala-152 is subject to Alanine amide. A propeptide spanning residues Ser-155–Asp-188 is cleaved from the precursor. Position 196 is an alanine amide (Ala-196). A propeptide spanning residues Ser-199–Asp-200 is cleaved from the precursor.

In terms of tissue distribution, venom gland.

Its subcellular location is the secreted. Functionally, synthetic BmK-YA activates human opioid receptors in vitro, with highest activity on the delta-type/OPRD1 receptor (EC(50)=2.5 uM) and lower activity on mu-type/OPRM1 and kappa-type/OPRK1 receptors (EC(50)=17 uM and 30 uM, respectively). This Olivierus martensii (Manchurian scorpion) protein is BmK-YA precursor.